Reading from the N-terminus, the 242-residue chain is MSMLCYTLIIAFLIGIWAAPKSEDNVPLGSPATPDLSDTSCAQTHKALKTSRNTDQRHPAPKKAEDQELGSAANIIVDPKLFQKRRFQSPRVLFSTQPPPLSRDEQSVEFLENEDALNRNIRSKRENHPVNDHGEYSVCDSVSVWVNKTTATDIKGKPVTVMVDVNLNNHVYKQYFFETKCKNPNPVPSGCRGIDSRHWNSYCTTTQSFVKALTKEGNQASWRFIRIDTACVCVISRKTGNF.

The first 18 residues, 1–18 (MSMLCYTLIIAFLIGIWA), serve as a signal peptide directing secretion. Residues 19–125 (APKSEDNVPL…ALNRNIRSKR (107 aa)) constitute a propeptide that is removed on maturation. The tract at residues 46 to 69 (KALKTSRNTDQRHPAPKKAEDQEL) is disordered. Positions 52–66 (RNTDQRHPAPKKAED) are enriched in basic and acidic residues. Cystine bridges form between cysteine 139–cysteine 203, cysteine 181–cysteine 231, and cysteine 191–cysteine 233. Asparagine 147 carries an N-linked (GlcNAc...) asparagine glycan.

The protein belongs to the NGF-beta family. In terms of assembly, homodimer; non-covalently linked. As to expression, expressed by the venom gland.

Its subcellular location is the secreted. Nerve growth factor is important for the development and maintenance of the sympathetic and sensory nervous systems. It stimulates division and differentiation of sympathetic and embryonic sensory neurons as well as basal forebrain cholinergic neurons in the brain. Its relevance in the snake venom is not clear. However, it has been shown to inhibit metalloproteinase-dependent proteolysis of platelet glycoprotein Ib alpha, suggesting a metalloproteinase inhibition to prevent metalloprotease autodigestion and/or protection against prey proteases. Binds a lipid between the two protein chains in the homodimer. The lipid-bound form promotes histamine relase from mouse mast cells, contrary to the lipid-free form. The sequence is that of Venom nerve growth factor 2 from Demansia vestigiata (Lesser black whip snake).